Consider the following 249-residue polypeptide: Fatty acid elongase 5 (249 aa).

The next 3 membrane-spanning stretches (helical) occupy residues 23-43 (VFVN…VIVL), 68-88 (VALS…GVFN), and 100-120 (WIFV…FIVL). Residues 131–135 (HIYHH) carry the HxxHH motif motif. The Nucleophile role is filled by His134. Helical transmembrane passes span 138–158 (IGFI…AFFG), 159–179 (AWIN…TSLG), 193–213 (MIQF…HSPI), and 217–236 (WAVL…MRFY).

The protein belongs to the ELO family.

The protein resides in the membrane. The enzyme catalyses an acyl-CoA + malonyl-CoA + H(+) = a 3-oxoacyl-CoA + CO2 + CoA. The protein operates within lipid metabolism; polyunsaturated fatty acid biosynthesis. Involved in the synthesis of fatty acids. Elongates C20 polyunsaturated fatty acids (PUFAs) with a preference for n-6 PUFAs. The sequence is that of Fatty acid elongase 5 from Leishmania major.